Consider the following 104-residue polypeptide: Pyrimidine/purine nucleoside phosphorylase (104 aa).

The protein belongs to the nucleoside phosphorylase PpnP family.

The enzyme catalyses a purine D-ribonucleoside + phosphate = a purine nucleobase + alpha-D-ribose 1-phosphate. It carries out the reaction adenosine + phosphate = alpha-D-ribose 1-phosphate + adenine. It catalyses the reaction cytidine + phosphate = cytosine + alpha-D-ribose 1-phosphate. The catalysed reaction is guanosine + phosphate = alpha-D-ribose 1-phosphate + guanine. The enzyme catalyses inosine + phosphate = alpha-D-ribose 1-phosphate + hypoxanthine. It carries out the reaction thymidine + phosphate = 2-deoxy-alpha-D-ribose 1-phosphate + thymine. It catalyses the reaction uridine + phosphate = alpha-D-ribose 1-phosphate + uracil. The catalysed reaction is xanthosine + phosphate = alpha-D-ribose 1-phosphate + xanthine. Its function is as follows. Catalyzes the phosphorolysis of diverse nucleosides, yielding D-ribose 1-phosphate and the respective free bases. Can use uridine, adenosine, guanosine, cytidine, thymidine, inosine and xanthosine as substrates. Also catalyzes the reverse reactions. The polypeptide is Pyrimidine/purine nucleoside phosphorylase (Geobacter sulfurreducens (strain ATCC 51573 / DSM 12127 / PCA)).